The following is a 931-amino-acid chain: Dual serine/threonine and tyrosine protein kinase (931 aa).

The segment at 1–24 (MEGDAPQRVSERVSGPGPGGGGGG) is disordered. A coiled-coil region spans residues 397 to 424 (RKKENELYESLMNIANRKQEEMKDMICE). Positions 654–908 (PKLGQELGRG…PLLGIVQPML (255 aa)) constitute a Protein kinase domain. ATP-binding positions include 660-668 (LGRGQYGVV) and lysine 683. The active-site Proton acceptor is the aspartate 779.

The protein belongs to the protein kinase superfamily. Ser/Thr protein kinase family.

It is found in the cytoplasm. The protein resides in the cell membrane. The protein localises to the apical cell membrane. Its subcellular location is the basolateral cell membrane. It localises to the cell junction. It carries out the reaction L-seryl-[protein] + ATP = O-phospho-L-seryl-[protein] + ADP + H(+). It catalyses the reaction L-threonyl-[protein] + ATP = O-phospho-L-threonyl-[protein] + ADP + H(+). The catalysed reaction is L-tyrosyl-[protein] + ATP = O-phospho-L-tyrosyl-[protein] + ADP + H(+). In terms of biological role, acts as a positive regulator of ERK phosphorylation downstream of fibroblast growth factor-receptor activation. Involved in the regulation of both caspase-dependent apoptosis and caspase-independent cell death. In the skin, it plays a predominant role in suppressing caspase-dependent apoptosis in response to UV stress in a range of dermal cell types. The sequence is that of Dual serine/threonine and tyrosine protein kinase (DSTYK) from Canis lupus familiaris (Dog).